The chain runs to 129 residues: Glycine cleavage system H protein (129 aa).

A Lipoyl-binding domain is found at 24-106 (SYTVGITEHA…YGEGWFFRVM (83 aa)). Lys-65 is subject to N6-lipoyllysine.

Belongs to the GcvH family. As to quaternary structure, the glycine cleavage system is composed of four proteins: P, T, L and H. (R)-lipoate is required as a cofactor.

In terms of biological role, the glycine cleavage system catalyzes the degradation of glycine. The H protein shuttles the methylamine group of glycine from the P protein to the T protein. The sequence is that of Glycine cleavage system H protein from Shewanella sp. (strain MR-7).